Consider the following 207-residue polypeptide: Outer-membrane lipoprotein LolB (207 aa).

The signal sequence occupies residues 1 to 21 (MPLPDFRLIRLLPLAALVLTA). Cys-22 carries the N-palmitoyl cysteine lipid modification. Cys-22 carries S-diacylglycerol cysteine lipidation.

This sequence belongs to the LolB family. As to quaternary structure, monomer.

It localises to the cell outer membrane. Its function is as follows. Plays a critical role in the incorporation of lipoproteins in the outer membrane after they are released by the LolA protein. This chain is Outer-membrane lipoprotein LolB, found in Shigella dysenteriae serotype 1 (strain Sd197).